We begin with the raw amino-acid sequence, 257 residues long: Ribonuclease PH (257 aa).

Phosphate-binding positions include Arg-87 and Gly-125–Arg-127.

It belongs to the RNase PH family. As to quaternary structure, homohexameric ring arranged as a trimer of dimers.

It catalyses the reaction tRNA(n+1) + phosphate = tRNA(n) + a ribonucleoside 5'-diphosphate. Functionally, phosphorolytic 3'-5' exoribonuclease that plays an important role in tRNA 3'-end maturation. Removes nucleotide residues following the 3'-CCA terminus of tRNAs; can also add nucleotides to the ends of RNA molecules by using nucleoside diphosphates as substrates, but this may not be physiologically important. Probably plays a role in initiation of 16S rRNA degradation (leading to ribosome degradation) during starvation. The chain is Ribonuclease PH from Geobacillus kaustophilus (strain HTA426).